A 534-amino-acid polypeptide reads, in one-letter code: MLKSSSSLVAKSILRHQCKSMSELYKIHTLLITLGLSEEEPFVSQTLSFSALSSSGDVDYAYKFLSKLSDPPNYGWNFVIRGFSNSRNPEKSISVYIQMLRFGLLPDHMTYPFLMKSSSRLSNRKLGGSLHCSVVKSGLEWDLFICNTLIHMYGSFRDQASARKLFDEMPHKNLVTWNSILDAYAKSGDVVSARLVFDEMSERDVVTWSSMIDGYVKRGEYNKALEIFDQMMRMGSSKANEVTMVSVICACAHLGALNRGKTVHRYILDVHLPLTVILQTSLIDMYAKCGSIGDAWSVFYRASVKETDALMWNAIIGGLASHGFIRESLQLFHKMRESKIDPDEITFLCLLAACSHGGLVKEAWHFFKSLKESGAEPKSEHYACMVDVLSRAGLVKDAHDFISEMPIKPTGSMLGALLNGCINHGNLELAETVGKKLIELQPHNDGRYVGLANVYAINKQFRAARSMREAMEKKGVKKIAGHSILDLDGTRHRFIAHDKTHFHSDKIYAVLQLTGAWMNLDVDYDDQDNHCFCS.

PPR repeat units lie at residues 41–71 (PFVSQTLSFSALSSSGDVDYAYKFLSKLSDP), 72–106 (PNYGWNFVIRGFSNSRNPEKSISVYIQMLRFGLLP), 107–141 (DHMTYPFLMKSSSRLSNRKLGGSLHCSVVKSGLEW), 142–172 (DLFICNTLIHMYGSFRDQASARKLFDEMPHK), 173–203 (NLVTWNSILDAYAKSGDVVSARLVFDEMSER), 204–238 (DVVTWSSMIDGYVKRGEYNKALEIFDQMMRMGSSK), 240–274 (NEVTMVSVICACAHLGALNRGKTVHRYILDVHLPL), 275–305 (TVILQTSLIDMYAKCGSIGDAWSVFYRASVK), 308–342 (DALMWNAIIGGLASHGFIRESLQLFHKMRESKIDP), 343–377 (DEITFLCLLAACSHGGLVKEAWHFFKSLKESGAEP), and 378–408 (KSEHYACMVDVLSRAGLVKDAHDFISEMPIK). The segment at 413 to 488 (MLGALLNGCI…IAGHSILDLD (76 aa)) is type E motif. The interval 489–519 (GTRHRFIAHDKTHFHSDKIYAVLQLTGAWMN) is type E(+) motif.

Belongs to the PPR family. PCMP-E subfamily.

The chain is Pentatricopeptide repeat-containing protein At5g08305 (PCMP-E105) from Arabidopsis thaliana (Mouse-ear cress).